We begin with the raw amino-acid sequence, 201 residues long: RILP-like protein 2 (201 aa).

Positions 14–108 constitute an RH1 domain; that stretch reads SPEMALDKDP…LRDGPQMGVG (95 aa). The stretch at 67–155 forms a coiled coil; that stretch reads LEMLEALVNQ…AQDELQCYKS (89 aa). An RH2 domain is found at 121 to 197; sequence RPRFTLQELR…TVKSLFSFKQ (77 aa). Residues 175 to 201 are disordered; sequence TSSPRSNASKEKSTVKSLFSFKQGKNT.

Belongs to the RILPL family.

It is found in the cytoplasm. The protein resides in the cytosol. It localises to the cytoskeleton. Its subcellular location is the microtubule organizing center. The protein localises to the centrosome. It is found in the cell projection. The protein resides in the cilium. Functionally, involved in cell shape and neuronal morphogenesis, positively regulating the establishment and maintenance of dendritic spines. Plays a role in cellular protein transport. This Xenopus laevis (African clawed frog) protein is RILP-like protein 2 (rilpl2).